The chain runs to 346 residues: Small ribosomal subunit biogenesis GTPase RsgA (346 aa).

A disordered region spans residues 1 to 26; it reads MAKRKLTQNQTRRIQSNNAKTLHRHK. Over residues 7-20 the composition is skewed to polar residues; the sequence is TQNQTRRIQSNNAK. Positions 103-271 constitute a CP-type G domain; it reads ENEISRPDYY…LIDSPGIREF (169 aa). GTP is bound by residues 159–162 and 213–221; these read NKVD and GQSGVGKSS. Zn(2+) contacts are provided by Cys-295, Cys-300, His-302, and Cys-308.

This sequence belongs to the TRAFAC class YlqF/YawG GTPase family. RsgA subfamily. Monomer. Associates with 30S ribosomal subunit, binds 16S rRNA. Zn(2+) is required as a cofactor.

Its subcellular location is the cytoplasm. Functionally, one of several proteins that assist in the late maturation steps of the functional core of the 30S ribosomal subunit. Helps release RbfA from mature subunits. May play a role in the assembly of ribosomal proteins into the subunit. Circularly permuted GTPase that catalyzes slow GTP hydrolysis, GTPase activity is stimulated by the 30S ribosomal subunit. The protein is Small ribosomal subunit biogenesis GTPase RsgA of Haemophilus influenzae (strain PittGG).